Here is a 280-residue protein sequence, read N- to C-terminus: Golgi phosphoprotein 3-like (280 aa).

The tract at residues 1–30 (MTTLTRRGRRADVGQENRVDSEDYIKDKDE) is disordered. Residues 10-30 (RADVGQENRVDSEDYIKDKDE) show a composition bias toward basic and acidic residues. Residues tryptophan 62, arginine 71, arginine 152, and arginine 155 each contribute to the a 1,2-diacyl-sn-glycero-3-phospho-(1D-myo-inositol 4-phosphate) site. The beta-hairpin required for oligomerization stretch occupies residues 171–182 (EKQNFLLFDMTT).

Belongs to the GOLPH3/VPS74 family. Homooligomer.

Its subcellular location is the golgi apparatus. It is found in the golgi stack membrane. The protein localises to the trans-Golgi network membrane. Phosphatidylinositol-4-phosphate-binding protein that may play a role in the process of vesicle budding at the Golgi and anterograde transport to the plasma membrane. In Xenopus tropicalis (Western clawed frog), this protein is Golgi phosphoprotein 3-like (golph3l).